Here is a 2207-residue protein sequence, read N- to C-terminus: Kinetochore-associated protein 1 (2207 aa).

T13 is modified (phosphothreonine). S15 is modified (phosphoserine). Residues 1024–1045 (EAAQAEHKHRGPPGPTPARGTH) form a disordered region.

As to quaternary structure, interacts with ZW10. This interaction is required for stable association with the kinetochore. Component of the RZZ complex composed of KNTC1/ROD, ZW10 and ZWILCH.

It is found in the cytoplasm. It localises to the nucleus. The protein localises to the chromosome. Its subcellular location is the centromere. The protein resides in the kinetochore. It is found in the cytoskeleton. It localises to the spindle. In terms of biological role, essential component of the mitotic checkpoint, which prevents cells from prematurely exiting mitosis. Required for the assembly of the dynein-dynactin and MAD1-MAD2 complexes onto kinetochores. Its function related to the spindle assembly machinery is proposed to depend on its association in the mitotic RZZ complex. The polypeptide is Kinetochore-associated protein 1 (Kntc1) (Mus musculus (Mouse)).